Reading from the N-terminus, the 396-residue chain is 1-deoxy-D-xylulose 5-phosphate reductoisomerase (396 aa).

NADPH is bound by residues Thr15, Gly16, Ser17, Ile18, Gly41, and Asn129. Lys130 serves as a coordination point for 1-deoxy-D-xylulose 5-phosphate. Glu131 contributes to the NADPH binding site. Asp155 is a binding site for Mn(2+). Residues Ser156, Glu157, Ser182, and His205 each contribute to the 1-deoxy-D-xylulose 5-phosphate site. Glu157 serves as a coordination point for Mn(2+). Gly211 serves as a coordination point for NADPH. The 1-deoxy-D-xylulose 5-phosphate site is built by Ser218, Asn223, Lys224, and Glu227. Glu227 provides a ligand contact to Mn(2+).

Belongs to the DXR family. The cofactor is Mg(2+). It depends on Mn(2+) as a cofactor.

The enzyme catalyses 2-C-methyl-D-erythritol 4-phosphate + NADP(+) = 1-deoxy-D-xylulose 5-phosphate + NADPH + H(+). It participates in isoprenoid biosynthesis; isopentenyl diphosphate biosynthesis via DXP pathway; isopentenyl diphosphate from 1-deoxy-D-xylulose 5-phosphate: step 1/6. Catalyzes the NADPH-dependent rearrangement and reduction of 1-deoxy-D-xylulose-5-phosphate (DXP) to 2-C-methyl-D-erythritol 4-phosphate (MEP). The sequence is that of 1-deoxy-D-xylulose 5-phosphate reductoisomerase from Xanthomonas campestris pv. campestris (strain 8004).